The sequence spans 547 residues: Glucose-6-phosphate isomerase (547 aa).

Glu-356 functions as the Proton donor in the catalytic mechanism. Active-site residues include His-387 and Lys-508.

The protein belongs to the GPI family.

The protein resides in the cytoplasm. The enzyme catalyses alpha-D-glucose 6-phosphate = beta-D-fructose 6-phosphate. It participates in carbohydrate biosynthesis; gluconeogenesis. It functions in the pathway carbohydrate degradation; glycolysis; D-glyceraldehyde 3-phosphate and glycerone phosphate from D-glucose: step 2/4. Its function is as follows. Catalyzes the reversible isomerization of glucose-6-phosphate to fructose-6-phosphate. The protein is Glucose-6-phosphate isomerase of Cupriavidus taiwanensis (strain DSM 17343 / BCRC 17206 / CCUG 44338 / CIP 107171 / LMG 19424 / R1) (Ralstonia taiwanensis (strain LMG 19424)).